A 265-amino-acid chain; its full sequence is Mlc titration factor A (265 aa).

Zn(2+) contacts are provided by H111, H148, H152, and E211.

The protein belongs to the MtfA family. As to quaternary structure, interacts with Mlc. Requires Zn(2+) as cofactor.

It localises to the cytoplasm. Functionally, involved in the modulation of the activity of the glucose-phosphotransferase system (glucose-PTS). Interacts with the transcriptional repressor Mlc, preventing its interaction with DNA and leading to the modulation of expression of genes regulated by Mlc, including ptsG, which encodes the PTS system glucose-specific EIICB component. In terms of biological role, shows zinc-dependent metallopeptidase activity. The protein is Mlc titration factor A of Escherichia coli O8 (strain IAI1).